Here is a 181-residue protein sequence, read N- to C-terminus: Thymidine kinase (181 aa).

13 to 20 (GPMFSGKS) contacts ATP. Glu85 functions as the Proton acceptor in the catalytic mechanism. Phe115 contacts substrate. Zn(2+) contacts are provided by Cys140 and Cys143. A substrate-binding site is contributed by 159 to 163 (IEIIG). The Zn(2+) site is built by Cys172 and Cys175.

Belongs to the thymidine kinase family.

It catalyses the reaction thymidine + ATP = dTMP + ADP + H(+). The chain is Thymidine kinase (TK) from Yaba monkey tumor virus (strain VR587) (YMTV).